The chain runs to 342 residues: MTESVTISLDAMGGDHGPDVVAPAALAALARNPALRLILVGQAEPVRQALQRHGGQESERLWVHPASEVVAMDEPPSQALRTKKDSSMRVSIQLVKQGEADASISAGNTGALMATARYVLKTLPGIDRPAIMSTIPTKGGYAHMLDLGANVDCTAEHLFQFAVMGSVCAEAIDGVAQPRVGLLNIGEEEIKGNDQVKRACQMLTDSPLNYVGYVEGDGIFKGLADVVVCDGFVGNVALKSSEGVAGLIAHYLRAEFQRNLFTRLAGLIALPVLRSLRGRIDPRQYNGASLLGLRGIVLKSHGGADAFAFGRAIETAVLEVRKGVPRMIDQRLESLLAAKESP.

The protein belongs to the PlsX family. In terms of assembly, homodimer. Probably interacts with PlsY.

The protein resides in the cytoplasm. It catalyses the reaction a fatty acyl-[ACP] + phosphate = an acyl phosphate + holo-[ACP]. Its pathway is lipid metabolism; phospholipid metabolism. In terms of biological role, catalyzes the reversible formation of acyl-phosphate (acyl-PO(4)) from acyl-[acyl-carrier-protein] (acyl-ACP). This enzyme utilizes acyl-ACP as fatty acyl donor, but not acyl-CoA. This chain is Phosphate acyltransferase, found in Alkalilimnicola ehrlichii (strain ATCC BAA-1101 / DSM 17681 / MLHE-1).